Reading from the N-terminus, the 673-residue chain is Auxin response factor 9 (673 aa).

Positions 126–228 (FCKTLTASDT…ELRVGVRRLM (103 aa)) form a DNA-binding region, TF-B3. 2 disordered regions span residues 356 to 386 (ELEPLDASNPQPPQPPLRNKRARPPASPSVV) and 514 to 545 (DSDQISQPSNGNKSDAPGTSSERSPLESQSRQ). Over residues 516 to 545 (DQISQPSNGNKSDAPGTSSERSPLESQSRQ) the composition is skewed to polar residues. The 93-residue stretch at 547–639 (RSCTKVIMQG…EEAKLLAPKS (93 aa)) folds into the PB1 domain.

Belongs to the ARF family. Homodimers and heterodimers. In terms of tissue distribution, expressed in roots, culms, leaves and young panicles.

It is found in the nucleus. Its function is as follows. Auxin response factors (ARFs) are transcriptional factors that bind specifically to the DNA sequence 5'-TGTCTC-3' found in the auxin-responsive promoter elements (AuxREs). This is Auxin response factor 9 (ARF9) from Oryza sativa subsp. japonica (Rice).